The primary structure comprises 332 residues: L-lactate dehydrogenase A chain (332 aa).

Ala2 carries the post-translational modification N-acetylalanine. Lys5 is modified (N6-acetyllysine; alternate). Lys5 is subject to N6-succinyllysine; alternate. Lys14 carries the N6-acetyllysine modification. 29 to 57 serves as a coordination point for NAD(+); the sequence is GAVGMACAISILMKELADEIALVDVMEDK. The residue at position 57 (Lys57) is an N6-acetyllysine; alternate. Lys57 is covalently cross-linked (Glycyl lysine isopeptide (Lys-Gly) (interchain with G-Cter in SUMO2); alternate). Residue Lys81 is modified to N6-acetyllysine. Position 99 (Arg99) interacts with NAD(+). A substrate-binding site is contributed by Arg106. An N6-acetyllysine; alternate modification is found at Lys118. N6-succinyllysine; alternate is present on Lys118. The residue at position 126 (Lys126) is an N6-acetyllysine. Asn138 provides a ligand contact to NAD(+). Residues Asn138 and Arg169 each coordinate substrate. The Proton acceptor role is filled by His193. 2 positions are modified to N6-acetyllysine: Lys224 and Lys232. Tyr239 carries the post-translational modification Phosphotyrosine. Lys243 carries the post-translational modification N6-acetyllysine. Residue Thr248 participates in substrate binding. Thr309 carries the phosphothreonine modification. Lys318 is modified (N6-acetyllysine; alternate). Lys318 carries the post-translational modification N6-succinyllysine; alternate. Residue Thr322 is modified to Phosphothreonine.

This sequence belongs to the LDH/MDH superfamily. LDH family. Homotetramer. Interacts with PTEN upstream reading frame protein MP31. In terms of processing, ISGylated.

It localises to the cytoplasm. The catalysed reaction is (S)-lactate + NAD(+) = pyruvate + NADH + H(+). It functions in the pathway fermentation; pyruvate fermentation to lactate; (S)-lactate from pyruvate: step 1/1. Its function is as follows. Interconverts simultaneously and stereospecifically pyruvate and lactate with concomitant interconversion of NADH and NAD(+). The protein is L-lactate dehydrogenase A chain (LDHA) of Sus scrofa (Pig).